A 374-amino-acid chain; its full sequence is Homoserine O-succinyltransferase (374 aa).

Positions 47–357 constitute an AB hydrolase-1 domain; sequence NAILVCHALS…NFGHDSFLME (311 aa). S153 acts as the Nucleophile in catalysis. A substrate-binding site is contributed by R223. Catalysis depends on residues D318 and H351. Residue D352 coordinates substrate.

It belongs to the AB hydrolase superfamily. MetX family. Homodimer.

It localises to the cytoplasm. It carries out the reaction L-homoserine + succinyl-CoA = O-succinyl-L-homoserine + CoA. It participates in amino-acid biosynthesis; L-methionine biosynthesis via de novo pathway; O-succinyl-L-homoserine from L-homoserine: step 1/1. Functionally, transfers a succinyl group from succinyl-CoA to L-homoserine, forming succinyl-L-homoserine. The protein is Homoserine O-succinyltransferase of Dechloromonas aromatica (strain RCB).